The sequence spans 149 residues: D-aminoacyl-tRNA deacylase (149 aa).

The Gly-cisPro motif, important for rejection of L-amino acids motif lies at 137 to 138 (GP).

The protein belongs to the DTD family. As to quaternary structure, homodimer.

Its subcellular location is the cytoplasm. It catalyses the reaction glycyl-tRNA(Ala) + H2O = tRNA(Ala) + glycine + H(+). The catalysed reaction is a D-aminoacyl-tRNA + H2O = a tRNA + a D-alpha-amino acid + H(+). Functionally, an aminoacyl-tRNA editing enzyme that deacylates mischarged D-aminoacyl-tRNAs. Also deacylates mischarged glycyl-tRNA(Ala), protecting cells against glycine mischarging by AlaRS. Acts via tRNA-based rather than protein-based catalysis; rejects L-amino acids rather than detecting D-amino acids in the active site. By recycling D-aminoacyl-tRNA to D-amino acids and free tRNA molecules, this enzyme counteracts the toxicity associated with the formation of D-aminoacyl-tRNA entities in vivo and helps enforce protein L-homochirality. The chain is D-aminoacyl-tRNA deacylase from Syntrophobacter fumaroxidans (strain DSM 10017 / MPOB).